A 176-amino-acid polypeptide reads, in one-letter code: Protein CURLY FLAG LEAF 2 (176 aa).

The short motif at 41-46 (FLELSS) is the EAR element. One can recognise a WW domain in the interval 48–82 (FSVPSHLEQCLDLKTGEIYYRSWNSGMRVKEDPRK). 2 disordered regions span residues 77-106 (KEDP…SSEE) and 111-130 (YESE…YHKE). Residues 93–106 (SSGESSGTVFSSEE) are compositionally biased toward low complexity.

As to quaternary structure, may interact with BHLH122/CFLAP1 and BHLH80/CFLAP2.

In terms of biological role, may negatively regulate the cuticle development by interacting with the HD-ZIP IV transcription factor HDG1. The polypeptide is Protein CURLY FLAG LEAF 2 (Arabidopsis thaliana (Mouse-ear cress)).